The sequence spans 349 residues: Anthranilate phosphoribosyltransferase (349 aa).

5-phospho-alpha-D-ribose 1-diphosphate is bound by residues G87, 90 to 91 (GD), T95, 97 to 100 (NIST), 115 to 123 (KHGNRSVSS), and S127. G87 is an anthranilate binding site. S99 lines the Mg(2+) pocket. N118 is a binding site for anthranilate. R173 provides a ligand contact to anthranilate. D231 and E232 together coordinate Mg(2+).

This sequence belongs to the anthranilate phosphoribosyltransferase family. Homodimer. It depends on Mg(2+) as a cofactor.

It carries out the reaction N-(5-phospho-beta-D-ribosyl)anthranilate + diphosphate = 5-phospho-alpha-D-ribose 1-diphosphate + anthranilate. It functions in the pathway amino-acid biosynthesis; L-tryptophan biosynthesis; L-tryptophan from chorismate: step 2/5. Its function is as follows. Catalyzes the transfer of the phosphoribosyl group of 5-phosphorylribose-1-pyrophosphate (PRPP) to anthranilate to yield N-(5'-phosphoribosyl)-anthranilate (PRA). The polypeptide is Anthranilate phosphoribosyltransferase (Shewanella loihica (strain ATCC BAA-1088 / PV-4)).